The primary structure comprises 776 residues: Protein phosphatase 1 regulatory subunit 21 (776 aa).

3 coiled-coil regions span residues 4-206 (GDLQ…LKTL), 432-466 (RLHD…TTND), and 555-597 (ESRE…KETL).

As to quaternary structure, component of the FERRY complex.

It is found in the early endosome. Functionally, component of the FERRY complex (Five-subunit Endosomal Rab5 and RNA/ribosome intermediary). The FERRY complex directly interacts with mRNAs and RAB5A, and functions as a RAB5A effector involved in the localization and the distribution of specific mRNAs most likely by mediating their endosomal transport. The complex recruits mRNAs and ribosomes to early endosomes through direct mRNA-interaction. Putative regulator of protein phosphatase 1 (PP1) activity. May play a role in the endosomal sorting process or in endosome maturation pathway. In Xenopus laevis (African clawed frog), this protein is Protein phosphatase 1 regulatory subunit 21 (ppp1r21).